The primary structure comprises 548 residues: Protein NRT1/ PTR FAMILY 2.4 (548 aa).

12 helical membrane-spanning segments follow: residues Thr-29 to Ile-49, Ile-65 to Phe-85, Ile-88 to Ile-108, Ile-136 to Ala-156, Phe-172 to Val-192, Trp-200 to Ala-220, Leu-316 to Met-336, Val-354 to Asn-374, Leu-393 to Val-413, Val-429 to Ala-449, Ser-468 to Ile-488, and Tyr-508 to Phe-528.

This sequence belongs to the major facilitator superfamily. Proton-dependent oligopeptide transporter (POT/PTR) (TC 2.A.17) family. In terms of tissue distribution, strongly expressed in the root stele.

It localises to the membrane. Transporter involved in a passive nitrate efflux. This Arabidopsis thaliana (Mouse-ear cress) protein is Protein NRT1/ PTR FAMILY 2.4 (NPF2.4).